A 230-amino-acid polypeptide reads, in one-letter code: Phosphatidate cytidylyltransferase (230 aa).

6 consecutive transmembrane segments (helical) span residues 33–53 (FVIA…LVGT), 67–87 (IPDL…LIFL), 95–115 (WLIM…MIGG), 133–153 (WSGL…VSFI), 167–187 (IYLF…DLFI), and 206–226 (HGGV…LFLM).

This sequence belongs to the CDS family.

It localises to the cell membrane. The catalysed reaction is a 1,2-diacyl-sn-glycero-3-phosphate + CTP + H(+) = a CDP-1,2-diacyl-sn-glycerol + diphosphate. It participates in phospholipid metabolism; CDP-diacylglycerol biosynthesis; CDP-diacylglycerol from sn-glycerol 3-phosphate: step 3/3. This Rickettsia conorii (strain ATCC VR-613 / Malish 7) protein is Phosphatidate cytidylyltransferase (cdsA).